We begin with the raw amino-acid sequence, 344 residues long: DNA polymerase III subunit delta (344 aa).

The protein belongs to the DNA polymerase HolA subunit family. In terms of assembly, DNA polymerase III contains a core (composed of alpha, epsilon and theta chains) that associates with a tau subunit. This core dimerizes to form the POLIII' complex. PolIII' associates with the gamma complex (composed of gamma, delta, delta', psi and chi chains) and with the beta chain to form the complete DNA polymerase III complex.

The catalysed reaction is DNA(n) + a 2'-deoxyribonucleoside 5'-triphosphate = DNA(n+1) + diphosphate. Its function is as follows. DNA polymerase III is a complex, multichain enzyme responsible for most of the replicative synthesis in bacteria. This DNA polymerase also exhibits 3' to 5' exonuclease activity. The delta subunit seems to interact with the gamma subunit to transfer the beta subunit on the DNA. This chain is DNA polymerase III subunit delta (holA), found in Haemophilus influenzae (strain ATCC 51907 / DSM 11121 / KW20 / Rd).